Consider the following 767-residue polypeptide: Syn-copalyl diphosphate synthase, chloroplastic (767 aa).

Residues methionine 1–methionine 47 constitute a chloroplast transit peptide. Residues glycine 45 to aspartate 74 are disordered. The segment covering glutamate 59–aspartate 74 has biased composition (basic and acidic residues). Lysine 233 is a binding site for substrate. 2 residues coordinate Mg(2+): aspartate 365 and aspartate 367. The short motif at aspartate 365–aspartate 368 is the DXDD motif element. Lysine 453 lines the substrate pocket.

Belongs to the terpene synthase family. It depends on Mg(2+) as a cofactor.

It localises to the plastid. The protein resides in the chloroplast. The catalysed reaction is (2E,6E,10E)-geranylgeranyl diphosphate = 9alpha-copalyl diphosphate. Its function is as follows. Catalyzes the conversion of geranylgeranyl diphosphate to the phytoalexin precursor syn-copalyl diphosphate. Required for the biosynthesis of momilactones that exude from roots and act as allelochemicals against lowland weeds in paddy soil. This chain is Syn-copalyl diphosphate synthase, chloroplastic, found in Oryza sativa subsp. japonica (Rice).